Consider the following 138-residue polypeptide: Small ribosomal subunit protein uS11c (138 aa).

It belongs to the universal ribosomal protein uS11 family. Part of the 30S ribosomal subunit.

The protein resides in the plastid. The chain is Small ribosomal subunit protein uS11c from Cuscuta obtusiflora (Peruvian dodder).